The primary structure comprises 290 residues: 4-hydroxy-tetrahydrodipicolinate synthase (290 aa).

A pyruvate-binding site is contributed by Thr44. The active-site Proton donor/acceptor is Tyr132. Lys160 functions as the Schiff-base intermediate with substrate in the catalytic mechanism. Ile202 contacts pyruvate.

Belongs to the DapA family. As to quaternary structure, homotetramer; dimer of dimers.

The protein localises to the cytoplasm. The catalysed reaction is L-aspartate 4-semialdehyde + pyruvate = (2S,4S)-4-hydroxy-2,3,4,5-tetrahydrodipicolinate + H2O + H(+). It participates in amino-acid biosynthesis; L-lysine biosynthesis via DAP pathway; (S)-tetrahydrodipicolinate from L-aspartate: step 3/4. Functionally, catalyzes the condensation of (S)-aspartate-beta-semialdehyde [(S)-ASA] and pyruvate to 4-hydroxy-tetrahydrodipicolinate (HTPA). This is 4-hydroxy-tetrahydrodipicolinate synthase from Legionella pneumophila subsp. pneumophila (strain Philadelphia 1 / ATCC 33152 / DSM 7513).